We begin with the raw amino-acid sequence, 212 residues long: Ribosome maturation factor RimP (212 aa).

This sequence belongs to the RimP family.

The protein resides in the cytoplasm. Its function is as follows. Required for maturation of 30S ribosomal subunits. The sequence is that of Ribosome maturation factor RimP from Variovorax paradoxus (strain S110).